The sequence spans 306 residues: Ornithine carbamoyltransferase (306 aa).

Carbamoyl phosphate-binding positions include 53–56 (STRT), Gln-80, Arg-104, and 131–134 (HPCQ). L-ornithine is bound by residues Asn-162, Asp-220, and 224-225 (SM). Residues 260–261 (CL) and Arg-288 each bind carbamoyl phosphate.

This sequence belongs to the aspartate/ornithine carbamoyltransferase superfamily. OTCase family.

The protein resides in the cytoplasm. The enzyme catalyses carbamoyl phosphate + L-ornithine = L-citrulline + phosphate + H(+). It participates in amino-acid biosynthesis; L-arginine biosynthesis; L-arginine from L-ornithine and carbamoyl phosphate: step 1/3. Reversibly catalyzes the transfer of the carbamoyl group from carbamoyl phosphate (CP) to the N(epsilon) atom of ornithine (ORN) to produce L-citrulline. The chain is Ornithine carbamoyltransferase from Dechloromonas aromatica (strain RCB).